The sequence spans 483 residues: Succinate semialdehyde dehydrogenase (483 aa).

Residues 156 to 157 (WN), 180 to 183 (KPAP), and 233 to 234 (GS) contribute to the NAD(+) site. Glu-255 acts as the Proton acceptor in catalysis. Position 256 (Leu-256) interacts with NAD(+). The active-site Nucleophile is the Cys-289. Glu-386 lines the NAD(+) pocket.

It belongs to the aldehyde dehydrogenase family. In terms of assembly, homotetramer.

The catalysed reaction is succinate semialdehyde + NAD(+) + H2O = succinate + NADH + 2 H(+). In terms of biological role, involved in the degradation of the pyridine ring of trigonelline (TG; N-methylnicotinate) into succinate and methylamine as carbon and nitrogen sources, respectively. Catalyzes the NAD(+)-dependent oxidation of succinate semialdehyde to succinate. This Acinetobacter baylyi (strain ATCC 33305 / BD413 / ADP1) protein is Succinate semialdehyde dehydrogenase.